The following is a 314-amino-acid chain: Lysophospholipase D GDPD1 (314 aa).

Residues 1-3 lie on the Extracellular side of the membrane; the sequence is MSS. The helical transmembrane segment at 4–24 threads the bilayer; that stretch reads TAAFCLLSTLGGYLVTSFLLL. Topologically, residues 25 to 195 are cytoplasmic; the sequence is KYPALLHQRK…VDKCYKENSD (171 aa). Residues 40–309 enclose the GP-PDE domain; that stretch reads SRHISHRGGA…DYPTKLKDFL (270 aa). The a divalent metal cation site is built by glutamate 72, aspartate 74, and histidine 87. The chain crosses the membrane as a helical span at residues 196–216; the sequence is IPILFSLQRVLLILGLFFTGL. Topologically, residues 217 to 314 are extracellular; that stretch reads LPFVPIREQF…LKDFLNNFSA (98 aa).

Belongs to the glycerophosphoryl diester phosphodiesterase family. As to expression, widely expressed.

The protein resides in the cytoplasm. It localises to the membrane. The protein localises to the perinuclear region. It is found in the endoplasmic reticulum. It catalyses the reaction 1-hexadecanoyl-sn-glycero-3-phosphocholine + H2O = 1-hexadecanoyl-sn-glycero-3-phosphate + choline + H(+). It carries out the reaction 1-hexadecanoyl-sn-glycero-3-phosphoethanolamine + H2O = 1-hexadecanoyl-sn-glycero-3-phosphate + ethanolamine + H(+). The catalysed reaction is N-hexadecanoyl-sn-glycero-3-phosphoethanolamine + H2O = N-hexadecanoylethanolamine + sn-glycerol 3-phosphate + H(+). The enzyme catalyses N-(5Z,8Z,11Z,14Z-eicosatetraenoyl)-1-(9Z-octadecenoyl)-sn-glycero-3-phosphoethanolamine + H2O = N-(5Z,8Z,11Z,14Z-eicosatetraenoyl)-ethanolamine + 1-(9Z-octadecenoyl)-sn-glycero-3-phosphate + H(+). It catalyses the reaction N,1-di-(9Z-octadecenoyl)-sn-glycero-3-phosphoethanolamine + H2O = N-(9Z-octadecenoyl) ethanolamine + 1-(9Z-octadecenoyl)-sn-glycero-3-phosphate + H(+). It carries out the reaction N-hexadecanoyl-1-(9Z-octadecenoyl)-sn-glycero-3-phosphoethanolamine + H2O = N-hexadecanoylethanolamine + 1-(9Z-octadecenoyl)-sn-glycero-3-phosphate + H(+). The catalysed reaction is a 1-O-alkyl-sn-glycero-3-phosphocholine + H2O = a 1-O-alkyl-sn-glycero-3-phosphate + choline + H(+). The enzyme catalyses 1-O-hexadecyl-sn-glycero-3-phosphocholine + H2O = 1-O-hexadecyl-sn-glycero-3-phosphate + choline + H(+). It catalyses the reaction 1-(9Z-octadecenoyl)-sn-glycero-3-phosphocholine + H2O = 1-(9Z-octadecenoyl)-sn-glycero-3-phosphate + choline + H(+). It carries out the reaction N,1-dihexadecanoyl-sn-glycero-3-phosphoethanolamine + H2O = N-hexadecanoylethanolamine + 1-hexadecanoyl-sn-glycero-3-phosphate + H(+). The catalysed reaction is 1-O-(1Z-octadecenyl)-sn-glycero-3-phospho-(N-5Z,8Z,11Z,14Z-eicosatetraenoyl)-ethanolamine + H2O = 1-O-(1Z-octadecenyl)-sn-glycero-3-phosphate + N-(5Z,8Z,11Z,14Z-eicosatetraenoyl)-ethanolamine + H(+). The enzyme catalyses 1-O-(1Z-octadecenyl)-sn-glycero-3-phospho-(N-9Z-octadecenoyl)-ethanolamine + H2O = 1-O-(1Z-octadecenyl)-sn-glycero-3-phosphate + N-(9Z-octadecenoyl) ethanolamine + H(+). It catalyses the reaction 1-O-(1Z-octadecenyl)-sn-glycero-3-phospho-N-hexadecanoyl-ethanolamine + H2O = 1-O-(1Z-octadecenyl)-sn-glycero-3-phosphate + N-hexadecanoylethanolamine + H(+). Lysophospholipase D activity is increased by magnesium and manganese and inhibited by calcium in a concentration dependent manner. Loss of lysophospholipase D activity by addition of EDTA. Its function is as follows. Hydrolyzes lysoglycerophospholipids to produce lysophosphatidic acid (LPA) and the corresponding amines. Shows a preference for 1-O-alkyl-sn-glycero-3-phosphocholine (lyso-PAF), lysophosphatidylethanolamine (lyso-PE) and lysophosphatidylcholine (lyso-PC). May be involved in bioactive N-acylethanolamine biosynthesis from both N-acyl-lysoplasmenylethanolamin (N-acyl-lysoPlsEt) and N-acyl-lysophosphatidylethanolamin (N-acyl-lysoPE). In addition, hydrolyzes glycerophospho-N-acylethanolamine to N-acylethanolamine. Does not display glycerophosphodiester phosphodiesterase activity, since it cannot hydrolyze either glycerophosphoinositol or glycerophosphocholine. The sequence is that of Lysophospholipase D GDPD1 from Mus musculus (Mouse).